The sequence spans 318 residues: Homoserine kinase (318 aa).

Pro-97–Cys-107 is an ATP binding site.

It belongs to the GHMP kinase family. Homoserine kinase subfamily.

It localises to the cytoplasm. The enzyme catalyses L-homoserine + ATP = O-phospho-L-homoserine + ADP + H(+). It participates in amino-acid biosynthesis; L-threonine biosynthesis; L-threonine from L-aspartate: step 4/5. Its function is as follows. Catalyzes the ATP-dependent phosphorylation of L-homoserine to L-homoserine phosphate. This Vibrio parahaemolyticus serotype O3:K6 (strain RIMD 2210633) protein is Homoserine kinase.